A 414-amino-acid chain; its full sequence is 25-hydroxycholesterol 7-alpha-hydroxylase (414 aa).

Cysteine 354 is a heme binding site.

This sequence belongs to the cytochrome P450 family. It depends on heme as a cofactor. As to expression, highly expressed in brain; also expressed in liver and kidney.

The protein localises to the endoplasmic reticulum membrane. The protein resides in the microsome membrane. The enzyme catalyses 25-hydroxycholesterol + reduced [NADPH--hemoprotein reductase] + O2 = 7alpha,25-dihydroxycholesterol + oxidized [NADPH--hemoprotein reductase] + H2O + H(+). It catalyses the reaction (25R)-cholest-5-ene-3beta,26-diol + reduced [NADPH--hemoprotein reductase] + O2 = (25R)-cholest-5-en-3beta,7alpha,26-triol + oxidized [NADPH--hemoprotein reductase] + H2O + H(+). The protein operates within lipid metabolism; bile acid biosynthesis. Functionally, oxysterol 7alpha-hydroxylase that mediates formation of 7-alpha,25-dihydroxycholesterol (7-alpha,25-OHC) from 25-hydroxycholesterol. Plays a key role in cell positioning and movement in lymphoid tissues: 7-alpha,25-dihydroxycholesterol (7-alpha,25-OHC) acts as a ligand for the G protein-coupled receptor GPR183/EBI2, a chemotactic receptor for a number of lymphoid cells. The chain is 25-hydroxycholesterol 7-alpha-hydroxylase (Cyp7b1) from Rattus norvegicus (Rat).